The sequence spans 353 residues: 3-isopropylmalate dehydrogenase (353 aa).

Substrate is bound by residues Arg-97, Arg-107, Arg-135, and Asp-219. Residues Asp-219, Asp-243, and Asp-247 each contribute to the Mg(2+) site.

The protein belongs to the isocitrate and isopropylmalate dehydrogenases family. LeuB type 1 subfamily. Homodimer. Mg(2+) is required as a cofactor. The cofactor is Mn(2+).

The protein resides in the cytoplasm. The catalysed reaction is (2R,3S)-3-isopropylmalate + NAD(+) = 4-methyl-2-oxopentanoate + CO2 + NADH. The protein operates within amino-acid biosynthesis; L-leucine biosynthesis; L-leucine from 3-methyl-2-oxobutanoate: step 3/4. Its function is as follows. Catalyzes the oxidation of 3-carboxy-2-hydroxy-4-methylpentanoate (3-isopropylmalate) to 3-carboxy-4-methyl-2-oxopentanoate. The product decarboxylates to 4-methyl-2 oxopentanoate. The polypeptide is 3-isopropylmalate dehydrogenase (Bacteroides fragilis (strain ATCC 25285 / DSM 2151 / CCUG 4856 / JCM 11019 / LMG 10263 / NCTC 9343 / Onslow / VPI 2553 / EN-2)).